The sequence spans 404 residues: Demethylphylloquinone reductase NdbB (404 aa).

Residue 7–43 (RICILGGGFGGLYTALRLGQLSWEGHTPPEIVLVDQR) coordinates FAD. NADP(+) is bound at residue 159–195 (IRIAIVGGGYSGVELAAKLGDRLGERGRIRIIERGKE).

It belongs to the NADH dehydrogenase family. FAD is required as a cofactor.

The enzyme catalyses demethylphylloquinone + NADPH + H(+) = demethylphylloquinol + NADP(+). It functions in the pathway cofactor biosynthesis; phylloquinone biosynthesis. With respect to regulation, inhibited by dicumarol. Its function is as follows. Bifunctional oxidoreductase probably ables to act both on prenyl naphthoquinones and on prenyl benzoquinones. Catalyzes the penultimate step in the biosynthesis of vitamin K1. This is Demethylphylloquinone reductase NdbB from Synechocystis sp. (strain ATCC 27184 / PCC 6803 / Kazusa).